Consider the following 997-residue polypeptide: Signal peptide, CUB and EGF-like domain-containing protein 2 (997 aa).

The signal sequence occupies residues 1–28; that stretch reads MGVAGCGRPREARALLLLLLLLPPLLAA. The 41-residue stretch at 43–83 folds into the EGF-like 1; calcium-binding domain; sequence DVDECAQGLDDCHADALCQNTPTSYKCSCKPGYQGEGRQCE. 8 disulfides stabilise this stretch: Cys47/Cys60, Cys54/Cys69, Cys71/Cys82, Cys88/Cys100, Cys96/Cys109, Cys111/Cys124, Cys130/Cys141, and Cys137/Cys150. The EGF-like 2; calcium-binding domain maps to 84-125; it reads DMDECDNTLNGGCVHDCLNIPGNYRCTCFDGFMLAHDGHNCL. The region spanning 126 to 162 is the EGF-like 3; calcium-binding domain; that stretch reads DMDECLENNGGCQHICTNVIGSYECRCKEGFFLSDNQ. EGF-like domains follow at residues 175 to 211, 215 to 250, and 284 to 319; these read CMNK…QKDC, CNHG…GRSC, and CAVN…GKTC. The 41-residue stretch at 321-361 folds into the EGF-like 7; calcium-binding domain; that stretch reads DIDECQTRNGGCNHFCKNTVGSFDCSCKKGFKLLTDEKSCQ. 9 disulfides stabilise this stretch: Cys325-Cys336, Cys332-Cys345, Cys347-Cys360, Cys366-Cys376, Cys372-Cys385, Cys387-Cys399, Cys405-Cys416, Cys412-Cys425, and Cys427-Cys440. The EGF-like 8; calcium-binding domain maps to 362 to 400; the sequence is DVDECSLERTCDHSCINHPGTFICACNPGYTLYSFTHCG. The EGF-like 9; calcium-binding domain occupies 401 to 441; the sequence is DTNECSVNNGGCQQVCINTVGSYECQCHPGFKLHWNKKDCV. Asn657 carries N-linked (GlcNAc...) asparagine glycosylation. Cys807 and Cys833 form a disulfide bridge. The CUB domain maps to 807–919; it reads CGGELGDFTG…RGFQVPYVTY (113 aa). The tract at residues 845 to 854 is interaction with the cholesterol-anchor of SHH; the sequence is ILIVVPEIFL. A disulfide bridge links Cys860 with Cys881.

In terms of assembly, interacts with SHH via the cholesterol anchor of the dually lipid-modified SHH (ShhNp). Interacts with PTCH1. Forms homooligomers and heterooligomers with SCUBE1 and SCUBE3. Interacts with VEGFR2. N-glycosylated. Expressed in adult heart, lung and testis.

The protein resides in the secreted. It is found in the cell surface. Lipid-binding protein required for SHH long-range signaling by binding to the dually lipid-modified SHH (ShhNp) and by promoting ShhNp mobilization, solubilization and release from the cell membrane. Acts by enhancing the proteolytic processing (shedding) of the lipid-modified N- and C- terminal of ShhNp at the cell surface. Synergizes with DISP1 to cause an increase in SHH secretion. Probable cell surface coreceptor for VEGFR2 involved in VEGFR2-mediated angiogenesis. The sequence is that of Signal peptide, CUB and EGF-like domain-containing protein 2 from Mus musculus (Mouse).